Here is a 241-residue protein sequence, read N- to C-terminus: Uracil-DNA glycosylase (241 aa).

The active-site Proton acceptor is D71.

Belongs to the uracil-DNA glycosylase (UDG) superfamily. UNG family.

It localises to the cytoplasm. The enzyme catalyses Hydrolyzes single-stranded DNA or mismatched double-stranded DNA and polynucleotides, releasing free uracil.. In terms of biological role, excises uracil residues from the DNA which can arise as a result of misincorporation of dUMP residues by DNA polymerase or due to deamination of cytosine. The protein is Uracil-DNA glycosylase of Xanthomonas euvesicatoria pv. vesicatoria (strain 85-10) (Xanthomonas campestris pv. vesicatoria).